An 843-amino-acid polypeptide reads, in one-letter code: MSSIARPPDPCLVAIILIVRSRAGPRLVFHYPPNPLSENGLRPARKERRTSRSKNGQDYKSNESSSSEESGSSSDDDEDEHQRQLQSQSQSQSHLSGSVVSGRRSSNFGLDDHVAMSVSPGGDSQRAGSMGSGSGRTSFRKRGGNSDVEEDSGAASDRQEDGSGGAGGPYRPPWESLLGLPADVWEKLLSPSPAWHKRRFEVGINDLAFIGWPVFVREDGTWRKQRRKKKKKRRADWEGGELGHNENAEDAPDDEDGDAGGNASGGGGLMAASTETLSPKQVTLSEAKRGSGSSGKAARSLVDCLDGDDKDSMTMFNVVFVLDPPLLEYSMRTKEVYDNIIKKFAKALKWEQARTDYVWREAQHISHLKEKAKERRTSLNTLYTELITQSSLARAIYTVHTSISASKIASVPLSPDVSISLQIPPLTSTPYLPGPTDKAYPGLWLTTADSVTPVEDPTADEYTAPHQVLAKHFALLLLDNEAAILRDVEASGGALAPALAHYLRCSKPTKSFAQISASSGIPLSTIQMLASHLVYWRRARAIPPIHQRDTYIVSPNCDLSKLEVATAAYQAAFPTLPSLPKMLSALSGTPRPYGSFIPSKDHKETYFAILAWLLRGGWVTQLRSFARVKVTPEIKMAVEVALRREEVDKYLRKGRSLEAQKSTDGENGNEEDENDDASSSSSSSLASQGSGEETPMPGRYQQESNPRLSHSMLDRNTSLRTSSLILFPHRASPLESRWLEQIVSRFPEHPRSAGRHRRGEGSNAGGGEIDPEYAALSTPMKDLWPTYIKYFNGLDALEKIPVREGLKRKFVWQVLTRLGLVTSQQSSIELDPREQVLVSVRHW.

An N-terminal signal peptide occupies residues 1-23; it reads MSSIARPPDPCLVAIILIVRSRA. Disordered regions lie at residues 30-174, 222-272, 657-706, and 749-768; these read HYPP…RPPW, WRKQ…LMAA, LEAQ…ESNP, and HPRSAGRHRRGEGSNAGGGE. Basic residues predominate over residues 43–52; the sequence is PARKERRTSR. 2 stretches are compositionally biased toward low complexity: residues 62–73 and 84–106; these read NESSSSEESGSS and QLQSQSQSQSHLSGSVVSGRRSS. The segment covering 223-234 has biased composition (basic residues); sequence RKQRRKKKKKRR. A compositionally biased stretch (basic and acidic residues) spans 235–247; that stretch reads ADWEGGELGHNEN. Residues 248–258 are compositionally biased toward acidic residues; the sequence is AEDAPDDEDGD. A compositionally biased stretch (gly residues) spans 259 to 269; that stretch reads AGGNASGGGGL. Residues 667 to 676 are compositionally biased toward acidic residues; sequence NGNEEDENDD. Residues 677–693 show a composition bias toward low complexity; the sequence is ASSSSSSSLASQGSGEE.

The protein belongs to the NPR3 family.

Functionally, mediates inactivation of the TORC1 complex in response to amino acid starvation. Required for meiotic nuclear division. The chain is Nitrogen permease regulator 3 (npr3) from Aspergillus fumigatus (strain ATCC MYA-4609 / CBS 101355 / FGSC A1100 / Af293) (Neosartorya fumigata).